The chain runs to 336 residues: MSSNSFLTPRIVEVHNISPLHAKVVMEPFEHGFGYTLGNALRRVLLSSIPGCAPTKVSISGVVHEYSTIDGLQEDVVDLILNLKGVVLKLHNNKTQSVLTLKKSSEGIVTAGDIEATHDVEIVNPDHVIAHITSGGKIEAQITVEKGRGYWPSANRSKEDKSSSSIGDILLDASFSPIRRVSYAVESARVEQRTDLDKLIIDIETNGSVDPEEAIRYAAKVLVEQFSFFADLESTPLPTEQPKAPVIDPILLRPVDDLELTVRSANCLKVENIFYIGDLIQRTEAELLRTPNLGRKSLNEIKEVLASRDLSLGMKLENWPPANLENYIKEPGHASS.

An alpha N-terminal domain (alpha-NTD) region spans residues M1 to E233. The alpha C-terminal domain (alpha-CTD) stretch occupies residues I247–S336.

This sequence belongs to the RNA polymerase alpha chain family. As to quaternary structure, homodimer. The RNAP catalytic core consists of 2 alpha, 1 beta, 1 beta' and 1 omega subunit. When a sigma factor is associated with the core the holoenzyme is formed, which can initiate transcription.

It carries out the reaction RNA(n) + a ribonucleoside 5'-triphosphate = RNA(n+1) + diphosphate. In terms of biological role, DNA-dependent RNA polymerase catalyzes the transcription of DNA into RNA using the four ribonucleoside triphosphates as substrates. This Nitrosomonas europaea (strain ATCC 19718 / CIP 103999 / KCTC 2705 / NBRC 14298) protein is DNA-directed RNA polymerase subunit alpha.